Consider the following 353-residue polypeptide: Thiamine-phosphate synthase (353 aa).

The interval 1–128 is unknown; the sequence is MKSMPVAPIA…AASAAAIRYG (128 aa). The tract at residues 129–353 is thiamine-phosphate synthase; the sequence is LYDLEVTVLQ…TSLQLLEALR (225 aa). Residues 185–189 and Asn-217 each bind 4-amino-2-methyl-5-(diphosphooxymethyl)pyrimidine; that span reads QYRNK. Asp-218 and Asp-237 together coordinate Mg(2+). Residue Ser-256 coordinates 4-amino-2-methyl-5-(diphosphooxymethyl)pyrimidine. Position 282–284 (282–284) interacts with 2-[(2R,5Z)-2-carboxy-4-methylthiazol-5(2H)-ylidene]ethyl phosphate; it reads TAT. Lys-285 serves as a coordination point for 4-amino-2-methyl-5-(diphosphooxymethyl)pyrimidine. Residue Gly-312 participates in 2-[(2R,5Z)-2-carboxy-4-methylthiazol-5(2H)-ylidene]ethyl phosphate binding.

This sequence belongs to the thiamine-phosphate synthase family. Mg(2+) serves as cofactor.

The catalysed reaction is 2-[(2R,5Z)-2-carboxy-4-methylthiazol-5(2H)-ylidene]ethyl phosphate + 4-amino-2-methyl-5-(diphosphooxymethyl)pyrimidine + 2 H(+) = thiamine phosphate + CO2 + diphosphate. It catalyses the reaction 2-(2-carboxy-4-methylthiazol-5-yl)ethyl phosphate + 4-amino-2-methyl-5-(diphosphooxymethyl)pyrimidine + 2 H(+) = thiamine phosphate + CO2 + diphosphate. The enzyme catalyses 4-methyl-5-(2-phosphooxyethyl)-thiazole + 4-amino-2-methyl-5-(diphosphooxymethyl)pyrimidine + H(+) = thiamine phosphate + diphosphate. Its pathway is cofactor biosynthesis; thiamine diphosphate biosynthesis; thiamine phosphate from 4-amino-2-methyl-5-diphosphomethylpyrimidine and 4-methyl-5-(2-phosphoethyl)-thiazole: step 1/1. Its function is as follows. Condenses 4-methyl-5-(beta-hydroxyethyl)thiazole monophosphate (THZ-P) and 2-methyl-4-amino-5-hydroxymethyl pyrimidine pyrophosphate (HMP-PP) to form thiamine monophosphate (TMP). This Prochlorococcus marinus (strain MIT 9303) protein is Thiamine-phosphate synthase.